Reading from the N-terminus, the 32-residue chain is ilv operon leader peptide (32 aa).

This protein is involved in control of the biosynthesis of isoleucine, leucine, and valine. The polypeptide is ilv operon leader peptide (ivbL) (Escherichia coli (strain K12)).